A 60-amino-acid chain; its full sequence is Large ribosomal subunit protein eL37 (60 aa).

Residues cysteine 19, cysteine 22, cysteine 34, and cysteine 37 each coordinate Zn(2+). The segment at 19-37 (CRRCGRMSYHKRHKICSSC) adopts a C4-type zinc-finger fold.

This sequence belongs to the eukaryotic ribosomal protein eL37 family. Zn(2+) is required as a cofactor.

Its function is as follows. Binds to the 23S rRNA. The protein is Large ribosomal subunit protein eL37 of Methanospirillum hungatei JF-1 (strain ATCC 27890 / DSM 864 / NBRC 100397 / JF-1).